Reading from the N-terminus, the 460-residue chain is uncharacterized protein (460 aa).

To yeast YGL164c.

This is an uncharacterized protein from Schizosaccharomyces pombe (strain 972 / ATCC 24843) (Fission yeast).